A 231-amino-acid polypeptide reads, in one-letter code: Lytic polysaccharide monooxygenase-like protein X325 (231 aa).

Positions 1–17 are cleaved as a signal peptide; that stretch reads MRLSLLVTLALTALIEA. His18 is a binding site for Cu(2+). N-linked (GlcNAc...) asparagine glycosylation is found at Asn34, Asn55, Asn98, Asn133, Asn174, and Asn180. 2 disulfide bridges follow: Cys47-Cys157 and Cys122-Cys178. Residue Ile202 is the site of GPI-anchor amidated isoleucine attachment. Positions 203–231 are cleaved as a propeptide — removed in mature form; that stretch reads ASTTTGSAPRYYSWAGWLPLVAGAIWMAL.

This sequence belongs to the X325 family. Cu(2+) is required as a cofactor.

It localises to the cell membrane. Functionally, lytic polysaccharide monooxygenase-like protein that has diverged to biological functions other than polysaccharide degradation since it does not perform oxidative cleavage of polysaccharides. Acts as a cell surface-bound protein that functions in the copper-accumulation pathway. May also act as the major cell wall sensor that regulates MAP kinase-dependent hyphal anastomosis, the fusion of hyphal cells. The chain is Lytic polysaccharide monooxygenase-like protein X325 from Hypocrea jecorina (strain QM6a) (Trichoderma reesei).